A 170-amino-acid polypeptide reads, in one-letter code: Photosystem I assembly protein Ycf3 (170 aa).

TPR repeat units lie at residues 35–68, 72–105, and 120–153; these read AFTY…EVDA, SYIL…NPSL, and GEQA…APTN.

This sequence belongs to the Ycf3 family.

It localises to the plastid. The protein resides in the chloroplast thylakoid membrane. Essential for the assembly of the photosystem I (PSI) complex. May act as a chaperone-like factor to guide the assembly of the PSI subunits. This Tetradesmus obliquus (Green alga) protein is Photosystem I assembly protein Ycf3.